Consider the following 300-residue polypeptide: NADH-cytochrome b5 reductase 1 (300 aa).

A helical membrane pass occupies residues Pro8–Phe28. Over residues Ser34–Ser45 the composition is skewed to low complexity. The segment at Ser34–Leu54 is disordered. Residues Asp57–Thr160 enclose the FAD-binding FR-type domain. FAD is bound by residues Ala140 to Gly155 and Ser166 to Leu198.

The protein belongs to the flavoprotein pyridine nucleotide cytochrome reductase family. Monomer. Component of the 2-(3-amino-3-carboxypropyl)histidine synthase complex composed of DPH1, DPH2, DPH3 and a NADH-dependent reductase, predominantly CBR1. FAD serves as cofactor.

It is found in the mitochondrion outer membrane. It catalyses the reaction 2 Fe(III)-[cytochrome b5] + NADH = 2 Fe(II)-[cytochrome b5] + NAD(+) + H(+). The enzyme catalyses 2 Fe(3+)-[Dph3] + NADH = 2 Fe(2+)-[Dph3] + NAD(+) + H(+). It participates in protein modification; peptidyl-diphthamide biosynthesis. Functionally, NADH-dependent reductase for DPH3 and cytochrome b5. Required for the first step of diphthamide biosynthesis, a post-translational modification of histidine which occurs in elongation factor 2. DPH1 and DPH2 transfer a 3-amino-3-carboxypropyl (ACP) group from S-adenosyl-L-methionine (SAM) to a histidine residue, the reaction is assisted by a reduction system comprising DPH3 and a NADH-dependent reductase, predominantly CBR1. By reducing DPH3, also involved in the formation of the tRNA wobble base modification mcm5s 2U (5-methoxycarbonylmethyl-2-thiouridine), mediated by the elongator complex. The cytochrome b5/NADH cytochrome b5 reductase electron transfer system supports the catalytic activity of several sterol biosynthetic enzymes. The polypeptide is NADH-cytochrome b5 reductase 1 (CBR1) (Lodderomyces elongisporus (strain ATCC 11503 / CBS 2605 / JCM 1781 / NBRC 1676 / NRRL YB-4239) (Yeast)).